A 494-amino-acid chain; its full sequence is DUF21 domain-containing protein At4g14240 (494 aa).

At 1–43 the chain is on the extracellular side; the sequence is MHLINAVAAARILSGIGQSNGNNGGEAIPFGSFEWITYAGISC. One can recognise a CNNM transmembrane domain in the interval 31-213; it reads GSFEWITYAG…GKGGELTHDE (183 aa). A helical transmembrane segment spans residues 44–64; that stretch reads FLVLFAGIMSGLTLGLMSLGL. The Cytoplasmic portion of the chain corresponds to 65–93; the sequence is VELEILQRSGTPNEKKQAAAIFPVVQKQH. The helical transmembrane segment at 94–114 threads the bilayer; the sequence is QLLVTLLLCNAMAMEGLPIYL. The Extracellular portion of the chain corresponds to 115–121; sequence DKLFNEY. A helical transmembrane segment spans residues 122-142; it reads VAIILSVTFVLAFGEVIPQAI. Residues 143-159 are Cytoplasmic-facing; sequence CTRYGLAVGANFVWLVR. A helical membrane pass occupies residues 160-180; it reads ILMTLCYPIAFPIGKILDLVL. At 181 to 494 the chain is on the extracellular side; the sequence is GHNDALFRRA…TITEPIRRNN (314 aa). CBS domains are found at residues 232–292, 297–352, and 364–425; these read MTPI…TETL, CIRR…SNDS, and GNHD…IVDE. 2 N-linked (GlcNAc...) asparagine glycosylation sites follow: N350 and N385. The disordered stretch occupies residues 459–494; the sequence is QKGTGGQNKQGQTNKVPGQEQDKMLGTITEPIRRNN.

The protein resides in the membrane. The sequence is that of DUF21 domain-containing protein At4g14240 (CBSDUF1) from Arabidopsis thaliana (Mouse-ear cress).